The following is a 384-amino-acid chain: Cytochrome b (384 aa).

Transmembrane regions (helical) follow at residues 32-52 (FGFL…FLAI), 76-98 (WLLR…IHIS), 113-133 (TWVV…MGYV), and 179-199 (FFSF…VHMA). The heme b site is built by His-82 and His-96. Heme b-binding residues include His-183 and His-197. His-202 lines the a ubiquinone pocket. 4 consecutive transmembrane segments (helical) span residues 225-245 (FIIK…LFVY), 289-309 (LGGV…PWIT), 321-341 (LYKK…WIGG), and 348-368 (YVVI…IFIP).

Belongs to the cytochrome b family. As to quaternary structure, the main subunits of complex b-c1 are: cytochrome b, cytochrome c1 and the Rieske protein. Heme b serves as cofactor.

It localises to the mitochondrion inner membrane. Functionally, component of the ubiquinol-cytochrome c reductase complex (complex III or cytochrome b-c1 complex) that is part of the mitochondrial respiratory chain. The b-c1 complex mediates electron transfer from ubiquinol to cytochrome c. Contributes to the generation of a proton gradient across the mitochondrial membrane that is then used for ATP synthesis. This chain is Cytochrome b (MT-CYB), found in Cyanidium caldarium (Red alga).